A 354-amino-acid chain; its full sequence is D-alanine--D-alanine ligase (354 aa).

One can recognise an ATP-grasp domain in the interval 140–344 (KRLLRDSGLS…ISTLLTRLIM (205 aa)). 170 to 225 (ADMFGLPFFVKPVNQGSSIGVAKVNDDYSFHSALDIAFFYSHKIIIESCIAGRELE) is a binding site for ATP. Mg(2+) is bound by residues aspartate 298, glutamate 311, and asparagine 313.

The protein belongs to the D-alanine--D-alanine ligase family. Mg(2+) is required as a cofactor. It depends on Mn(2+) as a cofactor.

The protein localises to the cytoplasm. The enzyme catalyses 2 D-alanine + ATP = D-alanyl-D-alanine + ADP + phosphate + H(+). The protein operates within cell wall biogenesis; peptidoglycan biosynthesis. In terms of biological role, cell wall formation. The protein is D-alanine--D-alanine ligase of Blochmanniella floridana.